Consider the following 234-residue polypeptide: Sugar fermentation stimulation protein homolog (234 aa).

This sequence belongs to the SfsA family.

The protein is Sugar fermentation stimulation protein homolog of Shewanella loihica (strain ATCC BAA-1088 / PV-4).